The sequence spans 481 residues: Squalene epoxidase erg1 (481 aa).

The helical transmembrane segment at 28 to 48 threads the bilayer; that stretch reads HADVVIIGAGVLGCALAVALG. Residues 38 to 39, 58 to 59, Arg-66, and Arg-138 contribute to the FAD site; these read VL and EA. Asn-146 is a glycosylation site (N-linked (GlcNAc...) asparagine). FAD contacts are provided by Asp-319 and Met-332. Transmembrane regions (helical) follow at residues 425-445 and 452-472; these read KPSV…WVLL and LFPV…VVIF.

This sequence belongs to the squalene monooxygenase family. FAD serves as cofactor.

Its subcellular location is the endoplasmic reticulum membrane. It is found in the microsome membrane. The catalysed reaction is squalene + reduced [NADPH--hemoprotein reductase] + O2 = (S)-2,3-epoxysqualene + oxidized [NADPH--hemoprotein reductase] + H2O + H(+). The protein operates within steroid metabolism; ergosterol biosynthesis. In terms of biological role, squalene epoxidase; part of the third module of ergosterol biosynthesis pathway that includes the late steps of the pathway. Erg1 catalyzes the epoxidation of squalene into 2,3-epoxysqualene. The third module or late pathway involves the ergosterol synthesis itself through consecutive reactions that mainly occur in the endoplasmic reticulum (ER) membrane. Firstly, the squalene synthase erg9 catalyzes the condensation of 2 farnesyl pyrophosphate moieties to form squalene, which is the precursor of all steroids. Squalene synthase is crucial for balancing the incorporation of farnesyl diphosphate (FPP) into sterol and nonsterol isoprene synthesis. Secondly, squalene is converted into lanosterol by the consecutive action of the squalene epoxidase erg1 and the lanosterol synthase erg7. Then, the delta(24)-sterol C-methyltransferase erg6 methylates lanosterol at C-24 to produce eburicol. Eburicol is the substrate of the sterol 14-alpha demethylase encoded by cyp51A and cyp51B, to yield 4,4,24-trimethyl ergosta-8,14,24(28)-trienol. The C-14 reductase erg24 then reduces the C14=C15 double bond which leads to 4,4-dimethylfecosterol. A sequence of further demethylations at C-4, involving the C-4 demethylation complex containing the C-4 methylsterol oxidases erg25A or erg25B, the sterol-4-alpha-carboxylate 3-dehydrogenase erg26 and the 3-keto-steroid reductase erg27, leads to the production of fecosterol via 4-methylfecosterol. The C-8 sterol isomerase erg2 then catalyzes the reaction which results in unsaturation at C-7 in the B ring of sterols and thus converts fecosterol to episterol. The sterol-C5-desaturase erg3B then catalyzes the introduction of a C-5 double bond in the B ring to produce 5-dehydroepisterol. The 2 other sterol-C5-desaturases, erg3A and erg3C, seem to be less important in ergosterol biosynthesis. The C-22 sterol desaturase erg5 further converts 5-dehydroepisterol into ergosta-5,7,22,24(28)-tetraen-3beta-ol by forming the C-22(23) double bond in the sterol side chain. Finally, ergosta-5,7,22,24(28)-tetraen-3beta-ol is substrate of the C-24(28) sterol reductases erg4A and erg4B to produce ergosterol. Possible alternative sterol biosynthetic pathways might exist from fecosterol to ergosterol, depending on the activities of the erg3 isoforms. The sequence is that of Squalene epoxidase erg1 from Aspergillus fumigatus (strain ATCC MYA-4609 / CBS 101355 / FGSC A1100 / Af293) (Neosartorya fumigata).